We begin with the raw amino-acid sequence, 332 residues long: Glycerol-3-phosphate dehydrogenase [NAD(P)+] (332 aa).

NADPH is bound by residues serine 11, phenylalanine 12, lysine 32, and lysine 106. The sn-glycerol 3-phosphate site is built by lysine 106, glycine 137, and serine 139. Alanine 141 provides a ligand contact to NADPH. Positions 192, 245, 255, 256, and 257 each coordinate sn-glycerol 3-phosphate. Lysine 192 serves as the catalytic Proton acceptor. Arginine 256 contributes to the NADPH binding site. NADPH-binding residues include valine 280 and glutamate 282.

This sequence belongs to the NAD-dependent glycerol-3-phosphate dehydrogenase family.

The protein resides in the cytoplasm. The enzyme catalyses sn-glycerol 3-phosphate + NAD(+) = dihydroxyacetone phosphate + NADH + H(+). It carries out the reaction sn-glycerol 3-phosphate + NADP(+) = dihydroxyacetone phosphate + NADPH + H(+). The protein operates within membrane lipid metabolism; glycerophospholipid metabolism. In terms of biological role, catalyzes the reduction of the glycolytic intermediate dihydroxyacetone phosphate (DHAP) to sn-glycerol 3-phosphate (G3P), the key precursor for phospholipid synthesis. This Staphylococcus epidermidis (strain ATCC 12228 / FDA PCI 1200) protein is Glycerol-3-phosphate dehydrogenase [NAD(P)+].